A 557-amino-acid chain; its full sequence is Dihydroxy-acid dehydratase (557 aa).

Asp78 is a Mg(2+) binding site. Cys119 lines the [2Fe-2S] cluster pocket. Mg(2+) contacts are provided by Asp120 and Lys121. Lys121 is subject to N6-carboxylysine. Cys192 serves as a coordination point for [2Fe-2S] cluster. Glu442 is a binding site for Mg(2+). Ser468 acts as the Proton acceptor in catalysis.

This sequence belongs to the IlvD/Edd family. As to quaternary structure, homodimer. It depends on [2Fe-2S] cluster as a cofactor. Requires Mg(2+) as cofactor.

It catalyses the reaction (2R)-2,3-dihydroxy-3-methylbutanoate = 3-methyl-2-oxobutanoate + H2O. The enzyme catalyses (2R,3R)-2,3-dihydroxy-3-methylpentanoate = (S)-3-methyl-2-oxopentanoate + H2O. It participates in amino-acid biosynthesis; L-isoleucine biosynthesis; L-isoleucine from 2-oxobutanoate: step 3/4. The protein operates within amino-acid biosynthesis; L-valine biosynthesis; L-valine from pyruvate: step 3/4. Functionally, functions in the biosynthesis of branched-chain amino acids. Catalyzes the dehydration of (2R,3R)-2,3-dihydroxy-3-methylpentanoate (2,3-dihydroxy-3-methylvalerate) into 2-oxo-3-methylpentanoate (2-oxo-3-methylvalerate) and of (2R)-2,3-dihydroxy-3-methylbutanoate (2,3-dihydroxyisovalerate) into 2-oxo-3-methylbutanoate (2-oxoisovalerate), the penultimate precursor to L-isoleucine and L-valine, respectively. This Bacillus cereus (strain ATCC 10987 / NRS 248) protein is Dihydroxy-acid dehydratase.